Reading from the N-terminus, the 476-residue chain is 3-isopropylmalate dehydratase large subunit (476 aa).

Cysteine 355, cysteine 416, and cysteine 419 together coordinate [4Fe-4S] cluster.

This sequence belongs to the aconitase/IPM isomerase family. LeuC type 1 subfamily. Heterodimer of LeuC and LeuD. [4Fe-4S] cluster is required as a cofactor.

It catalyses the reaction (2R,3S)-3-isopropylmalate = (2S)-2-isopropylmalate. It functions in the pathway amino-acid biosynthesis; L-leucine biosynthesis; L-leucine from 3-methyl-2-oxobutanoate: step 2/4. In terms of biological role, catalyzes the isomerization between 2-isopropylmalate and 3-isopropylmalate, via the formation of 2-isopropylmaleate. This chain is 3-isopropylmalate dehydratase large subunit, found in Sphingopyxis alaskensis (strain DSM 13593 / LMG 18877 / RB2256) (Sphingomonas alaskensis).